The sequence spans 437 residues: RING finger protein 150 (437 aa).

The N-terminal stretch at 1–34 (MTMSLIQACRSLALSTWLLSFCFVHLLCLDFTVA) is a signal peptide. The Extracellular portion of the chain corresponds to 35–207 (EKEEWYTAFV…NLQKYVSRTS (173 aa)). N-linked (GlcNAc...) asparagine glycosylation is found at Asn-45, Asn-124, Asn-152, and Asn-185. In terms of domain architecture, PA spans 80–182 (SPKQDARGEV…PKGKEIVSLL (103 aa)). A helical membrane pass occupies residues 208–228 (VVFVSISFIVLMIISLAWLVF). Topologically, residues 229-437 (YYIQRFRYAN…TDQDCEEVKS (209 aa)) are cytoplasmic. The RING-type; atypical zinc-finger motif lies at 277 to 318 (CAVCIEGYKPNDVVRILPCRHLFHKSCVDPWLLDHRTCPMCK).

It localises to the membrane. In Mus musculus (Mouse), this protein is RING finger protein 150 (Rnf150).